The sequence spans 142 residues: Transcriptional regulator MraZ (142 aa).

2 SpoVT-AbrB domains span residues 5–47 (EYQH…TINE) and 76–119 (ACIV…SREK).

This sequence belongs to the MraZ family. Forms oligomers.

The protein resides in the cytoplasm. Its subcellular location is the nucleoid. This chain is Transcriptional regulator MraZ, found in Clostridium botulinum (strain Eklund 17B / Type B).